A 345-amino-acid chain; its full sequence is MDGEDIPDFSSLKEETAYWKELSLKYKQSFQEARDELVEFQEGSRELEAELEAQLVQAEQRNRDLQADNQRLKYEVEALKEKLEHQYAQSYKQVSVLEDDLSQTRAIKEQLHKYVRELEQANDDLERAKRATIVSLEDFEQRLNQAIERNAFLESELDEKESLLVSVQRLKDEARDLRQELAVRERQQEVTRKSAPSSPTLDCEKMDSAVQASLSLPATPVGKGTENTFPSPKAIPNGFGTSPLTPSARISALNIVGDLLRKVGALESKLAACRNFAKDQASRKSYISGNVNCGVLNGNGTKFSRSGHTSFFDKGAVNGFDPAPPPPGLGSSRPSSAPGMLPLSV.

A coiled-coil region spans residues 28 to 190; that stretch reads QSFQEARDEL…LAVRERQQEV (163 aa). Residues 56–166 are self-association; sequence VQAEQRNRDL…LDEKESLLVS (111 aa). Positions 64-189 are interaction with KATNB1; it reads DLQADNQRLK…ELAVRERQQE (126 aa). Residues 114–133 form a required for interaction with PAFAH1B1 region; that stretch reads YVRELEQANDDLERAKRATI. Positions 175-345 are interaction with CENPF; the sequence is RDLRQELAVR…SAPGMLPLSV (171 aa). The interaction with YWHAE stretch occupies residues 189-256; it reads EVTRKSAPSS…SARISALNIV (68 aa). The interaction with NEFL stretch occupies residues 191–345; the sequence is TRKSAPSSPT…SAPGMLPLSV (155 aa). Residues 195-256 form an interaction with KATNA1 region; that stretch reads APSSPTLDCE…SARISALNIV (62 aa). The residue at position 215 (Ser-215) is a Phosphoserine. A Phosphothreonine; by CDK1 and MAPK1 modification is found at Thr-219. Ser-231 carries the post-translational modification Phosphoserine. Residues 241-280 are interaction with DISC1; it reads TSPLTPSARISALNIVGDLLRKVGALESKLAACRNFAKDQ. Ser-242 bears the Phosphoserine; by CDK1 mark. Phosphothreonine; by CDK1 and MAPK1 is present on Thr-245. The segment at 256-291 is required for localization to the centrosome and interaction with dynein, dynactin, tubulin gamma, PCM1 and PCNT; sequence VGDLLRKVGALESKLAACRNFAKDQASRKSYISGNV. Cys-273 carries S-palmitoyl cysteine; by ZDHHC2, ZDHHC3 and ZDHHC7 lipidation. The interval 315-345 is disordered; the sequence is GAVNGFDPAPPPPGLGSSRPSSAPGMLPLSV. Residues 329 to 339 are compositionally biased toward low complexity; it reads LGSSRPSSAPG. The residue at position 344 (Ser-344) is a Phosphoserine.

This sequence belongs to the nudE family. Interacts with PLEKHM1 (via N- and C-terminus). Interacts with YWHAE. Interacts directly with NEFL and indirectly with NEFH. Interacts with microtubules. Self-associates. Interacts with DISC1, dynein, dynactin, tubulin gamma, KATNA1, KATNB1, PAFAH1B1, PCM1 and PCNT. Interacts (via C-terminus) with CENPF. Interacts with ZNF365. Interacts with GTP-bound RAB9A; the interaction may lead to RAB9A-dynein motor tethering. Phosphorylated in mitosis. Can be phosphorylated by CDK1, CDK5 and MAPK1. Phosphorylation by CDK5 promotes interaction with KATNA1 and YWHAE. Post-translationally, palmitoylation at Cys-273 reduces affinity for dynein. In terms of tissue distribution, expressed in brain, heart, kidney, liver, lung, pancreas, placenta and skeletal muscle.

It localises to the cytoplasm. The protein resides in the cytoskeleton. Its subcellular location is the microtubule organizing center. It is found in the centrosome. The protein localises to the chromosome. It localises to the centromere. The protein resides in the kinetochore. Its subcellular location is the spindle. Required for organization of the cellular microtubule array and microtubule anchoring at the centrosome. May regulate microtubule organization at least in part by targeting the microtubule severing protein KATNA1 to the centrosome. Also positively regulates the activity of the minus-end directed microtubule motor protein dynein. May enhance dynein-mediated microtubule sliding by targeting dynein to the microtubule plus ends. Required for several dynein- and microtubule-dependent processes such as the maintenance of Golgi integrity, the centripetal motion of secretory vesicles and the coupling of the nucleus and centrosome. Also required during brain development for the migration of newly formed neurons from the ventricular/subventricular zone toward the cortical plate. Plays a role, together with DISC1, in the regulation of neurite outgrowth. Required for mitosis in some cell types but appears to be dispensible for mitosis in cortical neuronal progenitors, which instead requires NDE1. Facilitates the polymerization of neurofilaments from the individual subunits NEFH and NEFL. Positively regulates lysosome peripheral distribution and ruffled border formation in osteoclasts. Plays a role, together with DISC1, in the regulation of neurite outgrowth. May act as a RAB9A/B effector that tethers RAB9-associated late endosomes to the dynein motor for their retrograde transport to the trans-Golgi network. This is Nuclear distribution protein nudE-like 1 (NDEL1) from Homo sapiens (Human).